The sequence spans 163 residues: Photosystem II extrinsic protein V (163 aa).

A signal peptide spans 1–26; it reads MLKRSSWLATLLGLLTVASVSTIVYA. Positions 63, 66, 67, and 118 each coordinate heme c.

This sequence belongs to the cytochrome c family. PsbV subfamily. PSII is composed of 1 copy each of membrane proteins PsbA, PsbB, PsbC, PsbD, PsbE, PsbF, PsbH, PsbI, PsbJ, PsbK, PsbL, PsbM, PsbT, PsbY, PsbZ, Psb30/Ycf12, at least 3 peripheral proteins of the oxygen-evolving complex and a large number of cofactors. It forms dimeric complexes. The extrinsic subunits in red algae are PsbO (OEC33), PsbQ', cytochrome c-550 and PsbU. Requires heme c as cofactor.

The protein localises to the plastid. It is found in the chloroplast thylakoid membrane. One of the extrinsic, lumenal subunits of photosystem II (PSII). PSII is a light-driven water plastoquinone oxidoreductase, using light energy to abstract electrons from H(2)O, generating a proton gradient subsequently used for ATP formation. The extrinsic proteins stabilize the structure of photosystem II oxygen-evolving complex (OEC), the ion environment of oxygen evolution and protect the OEC against heat-induced inactivation. This Porphyra purpurea (Red seaweed) protein is Photosystem II extrinsic protein V.